The following is a 296-amino-acid chain: MDFWPEFMATSWGREFVAGGFGGVAGIISGYPLDTLRIRQQQSSKSGSAFSILRRMLAIEGPSSLYRGMAAPLASVTFQNAMVFQIYAIFSRSFDSSVPLVEPPSYRGVALGGVATGAVQSLLLTPVELIKIRLQLQQTKSGPITLAKSILRRQGLQGLYRGLTITVLRDAPAHGLYFWTYEYVRERLHPGCRKTGQENLRTMLVAGGLAGVASWVACYPLDVVKTRLQQGHGAYEGIADCFRKSVKQEGYTVLWRGLGTAVARAFVVNGAIFAAYEVALRCLFNQSPSPDIVTGD.

Solcar repeat units lie at residues 13–93, 104–187, and 198–282; these read GREF…FSRS, PSYR…VRER, and ENLR…ALRC. A run of 6 helical transmembrane segments spans residues 16–36, 70–90, 110–130, 162–181, 204–224, and 260–280; these read FVAGGFGGVAGIISGYPLDTL, AAPLASVTFQNAMVFQIYAIF, ALGGVATGAVQSLLLTPVELI, GLTITVLRDAPAHGLYFWTY, LVAGGLAGVASWVACYPLDVV, and TAVARAFVVNGAIFAAYEVAL.

This sequence belongs to the mitochondrial carrier (TC 2.A.29) family. As to expression, high expression in flowers, stamens, petals and pollen. Expressed in roots, leaves and stems.

It is found in the mitochondrion inner membrane. Its activity is regulated as follows. Inhibited by mercuric chloride. Mitochondrial arginine transporter that catalyzes the counter-exchange of arginine with lysine, ornithine, arginine, histidine and citrulline. Substrate preference in reconstituted proteoliposomes is arginine &gt; homoarginine &gt; citrulline &gt; histidine &gt; lysine &gt; ornithine. May be involved in the delivery of arginine, released from seed reserves, to mitochondrial arginase and the export of ornithine. May contribute to proline accumulation in response to hyperosmotic stress. This Arabidopsis thaliana (Mouse-ear cress) protein is Mitochondrial arginine transporter BAC2 (BAC2).